Here is a 1064-residue protein sequence, read N- to C-terminus: Carbamoyl phosphate synthase large chain (1064 aa).

Residues 1 to 401 (MPKRNDIKKI…SLLKAVRSLE (401 aa)) form a carboxyphosphate synthetic domain region. 12 residues coordinate ATP: Arg-129, Arg-169, Gly-175, Gly-176, Glu-208, Ile-210, Glu-215, Gly-241, Val-242, His-243, Gln-284, and Glu-298. An ATP-grasp 1 domain is found at 133 to 327 (KELCESINEP…IAKMSAKIAI (195 aa)). Residues Gln-284, Glu-298, and Asn-300 each coordinate Mg(2+). Mn(2+)-binding residues include Gln-284, Glu-298, and Asn-300. An oligomerization domain region spans residues 402–546 (IGVFHNEMTE…YSTYEWENES (145 aa)). The interval 547 to 929 (KRSDKEKIIV…ALYKSFEAAK (383 aa)) is carbamoyl phosphate synthetic domain. The ATP-grasp 2 domain occupies 671 to 861 (EKALQDLDIP…MAQLATQMIL (191 aa)). 10 residues coordinate ATP: Arg-707, Ser-746, Leu-748, Glu-752, Gly-777, Val-778, His-779, Ser-780, Gln-820, and Glu-832. Residues Gln-820, Glu-832, and Asn-834 each contribute to the Mg(2+) site. Gln-820, Glu-832, and Asn-834 together coordinate Mn(2+). Residues 930-1064 (LHMADYGSVL…QSRSFTTKNI (135 aa)) form the MGS-like domain. The interval 930–1064 (LHMADYGSVL…QSRSFTTKNI (135 aa)) is allosteric domain.

Belongs to the CarB family. Composed of two chains; the small (or glutamine) chain promotes the hydrolysis of glutamine to ammonia, which is used by the large (or ammonia) chain to synthesize carbamoyl phosphate. Tetramer of heterodimers (alpha,beta)4. Mg(2+) serves as cofactor. It depends on Mn(2+) as a cofactor.

The catalysed reaction is hydrogencarbonate + L-glutamine + 2 ATP + H2O = carbamoyl phosphate + L-glutamate + 2 ADP + phosphate + 2 H(+). The enzyme catalyses hydrogencarbonate + NH4(+) + 2 ATP = carbamoyl phosphate + 2 ADP + phosphate + 2 H(+). Its pathway is amino-acid biosynthesis; L-arginine biosynthesis; carbamoyl phosphate from bicarbonate: step 1/1. It functions in the pathway pyrimidine metabolism; UMP biosynthesis via de novo pathway; (S)-dihydroorotate from bicarbonate: step 1/3. Functionally, large subunit of the glutamine-dependent carbamoyl phosphate synthetase (CPSase). CPSase catalyzes the formation of carbamoyl phosphate from the ammonia moiety of glutamine, carbonate, and phosphate donated by ATP, constituting the first step of 2 biosynthetic pathways, one leading to arginine and/or urea and the other to pyrimidine nucleotides. The large subunit (synthetase) binds the substrates ammonia (free or transferred from glutamine from the small subunit), hydrogencarbonate and ATP and carries out an ATP-coupled ligase reaction, activating hydrogencarbonate by forming carboxy phosphate which reacts with ammonia to form carbamoyl phosphate. In Lactococcus lactis subsp. cremoris (strain MG1363), this protein is Carbamoyl phosphate synthase large chain.